We begin with the raw amino-acid sequence, 287 residues long: MATSTLPQVPYKVGVVGYGRLGQSLVSRLLAQGSELGLELVFVWNRDPGRMAGSVPPALQLQDLTALEERHPDLVVEVAHPKIIHESGAQILRHANLLVGSPSALADQTTEQQLLEASKRWGHTVFVARGALWGSEDISRLDAAGGLQSLRVTMATHPDGFRLEGPLAAAHSSGPRTVLYEGPVRGLCPLAPRNSNTMAAAALAAPSLGFDRVIGVLVADLSLTDMHVVDVELLGPPGPSGRSFAVHTHRENPAQPGAVTGSATVTAFWHSLLGCCQLTSRPGIHLC.

2 positions are modified to phosphoserine: Ser24 and Ser172.

It belongs to the L-aspartate dehydrogenase family.

The protein is Aspartate dehydrogenase domain-containing protein of Mus musculus (Mouse).